The chain runs to 317 residues: Protein IMPACT-B (317 aa).

An RWD domain is found at 17–118; that stretch reads EEIEALSSIY…EKIREFLTEK (102 aa). The interval 296 to 317 is disordered; sequence DSTEETSKAGGKSKKPKSKKTK. Over residues 306 to 317 the composition is skewed to basic residues; that stretch reads GKSKKPKSKKTK.

This sequence belongs to the IMPACT family. As to quaternary structure, interacts with GCN1; prevents the interaction of GCN1 with EIF2AK4/GCN2 and inhibits EIF2AK4/GCN2 kinase activity. Interaction with RPL39; this interaction occurs in a GCN1-independent manner. Associates with ribosomes; this interaction occurs in a GCN1-independent manner. Associates with actin; this interaction occurs in a GCN1-independent manner.

It is found in the cytoplasm. In terms of biological role, translational regulator that ensures constant high levels of translation upon a variety of stress conditions, such as amino acid starvation, UV-C irradiation, proteasome inhibitor treatment and glucose deprivation. Plays a role as a negative regulator of the EIF2AK4/GCN2 kinase activity; impairs GCN1-mediated EIF2AK4/GCN2 activation, and hence EIF2AK4/GCN2-mediated eIF-2-alpha phosphorylation and subsequent down-regulation of protein synthesis. Plays a role in differentiation of neuronal cells by stimulating neurite outgrowth. This chain is Protein IMPACT-B (impact-B), found in Xenopus tropicalis (Western clawed frog).